Here is a 158-residue protein sequence, read N- to C-terminus: SsrA-binding protein (158 aa).

The segment at 130–158 is disordered; the sequence is KGKKNHDKREAQAKRDWSRQKQRLLKDHG. Residues 136 to 158 are compositionally biased toward basic and acidic residues; that stretch reads DKREAQAKRDWSRQKQRLLKDHG.

It belongs to the SmpB family.

It is found in the cytoplasm. Its function is as follows. Required for rescue of stalled ribosomes mediated by trans-translation. Binds to transfer-messenger RNA (tmRNA), required for stable association of tmRNA with ribosomes. tmRNA and SmpB together mimic tRNA shape, replacing the anticodon stem-loop with SmpB. tmRNA is encoded by the ssrA gene; the 2 termini fold to resemble tRNA(Ala) and it encodes a 'tag peptide', a short internal open reading frame. During trans-translation Ala-aminoacylated tmRNA acts like a tRNA, entering the A-site of stalled ribosomes, displacing the stalled mRNA. The ribosome then switches to translate the ORF on the tmRNA; the nascent peptide is terminated with the 'tag peptide' encoded by the tmRNA and targeted for degradation. The ribosome is freed to recommence translation, which seems to be the essential function of trans-translation. This chain is SsrA-binding protein, found in Ruegeria sp. (strain TM1040) (Silicibacter sp.).